A 379-amino-acid chain; its full sequence is 1-deoxy-D-xylulose 5-phosphate reductoisomerase (379 aa).

NADPH contacts are provided by threonine 10, glycine 11, serine 12, isoleucine 13, asparagine 39, and asparagine 121. Lysine 122 serves as a coordination point for 1-deoxy-D-xylulose 5-phosphate. An NADPH-binding site is contributed by glutamate 123. Residue aspartate 147 participates in Mn(2+) binding. Serine 148, glutamate 149, serine 173, and histidine 196 together coordinate 1-deoxy-D-xylulose 5-phosphate. Glutamate 149 is a binding site for Mn(2+). Glycine 202 contacts NADPH. 4 residues coordinate 1-deoxy-D-xylulose 5-phosphate: serine 209, asparagine 214, lysine 215, and glutamate 218. Mn(2+) is bound at residue glutamate 218.

The protein belongs to the DXR family. It depends on Mg(2+) as a cofactor. Mn(2+) is required as a cofactor.

The catalysed reaction is 2-C-methyl-D-erythritol 4-phosphate + NADP(+) = 1-deoxy-D-xylulose 5-phosphate + NADPH + H(+). It functions in the pathway isoprenoid biosynthesis; isopentenyl diphosphate biosynthesis via DXP pathway; isopentenyl diphosphate from 1-deoxy-D-xylulose 5-phosphate: step 1/6. In terms of biological role, catalyzes the NADPH-dependent rearrangement and reduction of 1-deoxy-D-xylulose-5-phosphate (DXP) to 2-C-methyl-D-erythritol 4-phosphate (MEP). This Chlamydia caviae (strain ATCC VR-813 / DSM 19441 / 03DC25 / GPIC) (Chlamydophila caviae) protein is 1-deoxy-D-xylulose 5-phosphate reductoisomerase.